Here is a 509-residue protein sequence, read N- to C-terminus: Hyaluronidase PH-20 (509 aa).

The signal sequence occupies residues 1–35 (MGVLKFKHIFFRSFVKSSGVSQIVFTFLLIPCCLT). 2 disulfide bridges follow: C60-C351 and C224-C238. N-linked (GlcNAc...) asparagine glycosylation is present at N82. The active-site Proton donor is the E148. N-linked (GlcNAc...) asparagine glycosylation is found at N166, N235, N254, and N368. 3 disulfides stabilise this stretch: C376-C387, C381-C435, and C437-C464. N393 carries N-linked (GlcNAc...) asparagine glycosylation. A lipid anchor (GPI-anchor amidated serine) is attached at S490. The propeptide at 491 to 509 (ATMFIVSILFLIISSVASL) is removed in mature form.

It belongs to the glycosyl hydrolase 56 family. In terms of processing, N-glycosylated. As to expression, testis.

It is found in the cell membrane. It carries out the reaction Random hydrolysis of (1-&gt;4)-linkages between N-acetyl-beta-D-glucosamine and D-glucuronate residues in hyaluronate.. Involved in sperm-egg adhesion. Upon fertilization sperm must first penetrate a layer of cumulus cells that surrounds the egg before reaching the zona pellucida. The cumulus cells are embedded in a matrix containing hyaluronic acid which is formed prior to ovulation. This protein aids in penetrating the layer of cumulus cells by digesting hyaluronic acid. In Homo sapiens (Human), this protein is Hyaluronidase PH-20 (SPAM1).